We begin with the raw amino-acid sequence, 267 residues long: Probable aquaporin TIP3-2 (267 aa).

Met1 carries the post-translational modification N-acetylmethionine. An N-acetylalanine; in Probable aquaporin TIP3-2, N-terminally processed modification is found at Ala2. Topologically, residues 2–26 are cytoplasmic; the sequence is ATSARRAYGFGRADEATHPDSIRAT. The helical transmembrane segment at 27 to 47 threads the bilayer; it reads LAEFLSTFVFVFAGEGSILAL. Topologically, residues 48–66 are vacuolar; the sequence is DKLYWDTAAHTGTNTPGGL. The helical transmembrane segment at 67 to 87 threads the bilayer; sequence VLVALAHALALFAAVSAAINV. The Cytoplasmic portion of the chain corresponds to 88-110; the sequence is SGGHVNPAVTFAALIGGRISVIR. The NPA 1 motif lies at 93–95; that stretch reads NPA. Residues 111-131 form a helical membrane-spanning segment; the sequence is AIYYWVAQLIGAILACLLLRL. Topologically, residues 132–151 are vacuolar; it reads ATNGLRPVGFHVASGVSELH. The chain crosses the membrane as a helical span at residues 152–172; the sequence is GLLMEIILTFALVYVVYSTAI. Over 173 to 178 the chain is Cytoplasmic; the sequence is DPKRGS. The chain crosses the membrane as a helical span at residues 179 to 199; the sequence is IGIIAPLAIGLIVGANILVGG. Over 200–226 the chain is Vacuolar; sequence PFDGASMNPARAFGPALVGWRWSNHWI. The NPA 2 motif lies at 207–209; that stretch reads NPA. A helical membrane pass occupies residues 227–247; the sequence is YWVGPFIGGALAALIYEYMII. The Cytoplasmic segment spans residues 248–267; that stretch reads PSVNEPPHHSTHQPLAPEDY.

The protein belongs to the MIP/aquaporin (TC 1.A.8) family. TIP (TC 1.A.8.10) subfamily. In terms of tissue distribution, predominantly expressed in developing seeds. Also expressed in rosette leaves.

It is found in the vacuole membrane. Aquaporins facilitate the transport of water and small neutral solutes across cell membranes. This chain is Probable aquaporin TIP3-2 (TIP3-2), found in Arabidopsis thaliana (Mouse-ear cress).